A 500-amino-acid chain; its full sequence is Glutamate--tRNA ligase (500 aa).

The 'HIGH' region signature appears at 13–23 (PSPTGTPHVGM). The 'KMSKS' region signature appears at 258 to 262 (KLSKR). Lysine 261 is a binding site for ATP.

The protein belongs to the class-I aminoacyl-tRNA synthetase family. Glutamate--tRNA ligase type 1 subfamily. As to quaternary structure, monomer.

Its subcellular location is the cytoplasm. It carries out the reaction tRNA(Glu) + L-glutamate + ATP = L-glutamyl-tRNA(Glu) + AMP + diphosphate. Catalyzes the attachment of glutamate to tRNA(Glu) in a two-step reaction: glutamate is first activated by ATP to form Glu-AMP and then transferred to the acceptor end of tRNA(Glu). This is Glutamate--tRNA ligase from Corynebacterium jeikeium (strain K411).